Consider the following 234-residue polypeptide: Thymidine kinase, cytosolic (234 aa).

The residue at position 2 (Ser2) is an N-acetylserine. Residues Ser2 and Ser13 each carry the phosphoserine modification. ATP-binding positions include 26–33 (GPMFSGKS), 58–60 (DTR), and 97–100 (DEGQ). Glu98 serves as the catalytic Proton acceptor. Residue Phe128 participates in substrate binding. Cys153 and Cys156 together coordinate Zn(2+). Substrate contacts are provided by residues 172-176 (VEVIG) and Tyr181. 2 residues coordinate Zn(2+): Cys185 and Cys188. Residues 203 to 205 (KEN) carry the KEN box motif. At Ser231 the chain carries Phosphoserine.

The protein belongs to the thymidine kinase family. Homotetramer. Tetramerization from dimerization is induced by ATP and increases catalytic efficiency due to a high affinity for thymidine. Tetramerization is inhibited by phosphorylation at Ser-13. Interacts (via the KEN box) with FZR1. In terms of processing, phosphorylated on Ser-13 in mitosis. Phosphorylation of Ser-13 by CDK1 during mitosis reduces homotetramerization and catalytic efficiency when DNA replication is complete and intracellular TK1 is still present at a high level. Post-translationally, polyubiquitinated. Postmitosis, ubiquitination leads to proteasomal degradation. The KEN box sequence located at the C-terminal region targets for degradation by the anaphase promoting complex (APC/C) activated and rate-limited by FZR1.

It is found in the cytoplasm. It catalyses the reaction thymidine + ATP = dTMP + ADP + H(+). In terms of biological role, cell-cycle-regulated enzyme of importance in nucleotide metabolism. Catalyzes the first enzymatic step in the salvage pathway converting thymidine into thymidine monophosphate. Transcriptional regulation limits expression to the S phase of the cell cycle and transient expression coincides with the oscillation in the intracellular dTTP concentration. Also important for the activation of anticancer and antiviral nucleoside analog prodrugs such as 1-b-d-arabinofuranosylcytosine (AraC) and 3c-azido-3c-deoxythymidine (AZT). The chain is Thymidine kinase, cytosolic from Homo sapiens (Human).